Here is a 393-residue protein sequence, read N- to C-terminus: ATP phosphoribosyltransferase regulatory subunit (393 aa).

This sequence belongs to the class-II aminoacyl-tRNA synthetase family. HisZ subfamily. Heteromultimer composed of HisG and HisZ subunits.

Its subcellular location is the cytoplasm. The protein operates within amino-acid biosynthesis; L-histidine biosynthesis; L-histidine from 5-phospho-alpha-D-ribose 1-diphosphate: step 1/9. Its function is as follows. Required for the first step of histidine biosynthesis. May allow the feedback regulation of ATP phosphoribosyltransferase activity by histidine. The polypeptide is ATP phosphoribosyltransferase regulatory subunit (Chromohalobacter salexigens (strain ATCC BAA-138 / DSM 3043 / CIP 106854 / NCIMB 13768 / 1H11)).